We begin with the raw amino-acid sequence, 315 residues long: Aspartate carbamoyltransferase catalytic subunit (315 aa).

Carbamoyl phosphate-binding residues include arginine 65 and threonine 66. Lysine 93 lines the L-aspartate pocket. Positions 115, 145, and 148 each coordinate carbamoyl phosphate. 2 residues coordinate L-aspartate: arginine 179 and arginine 234. Carbamoyl phosphate-binding residues include glycine 275 and proline 276.

Belongs to the aspartate/ornithine carbamoyltransferase superfamily. ATCase family. In terms of assembly, heterododecamer (2C3:3R2) of six catalytic PyrB chains organized as two trimers (C3), and six regulatory PyrI chains organized as three dimers (R2).

The catalysed reaction is carbamoyl phosphate + L-aspartate = N-carbamoyl-L-aspartate + phosphate + H(+). Its pathway is pyrimidine metabolism; UMP biosynthesis via de novo pathway; (S)-dihydroorotate from bicarbonate: step 2/3. Catalyzes the condensation of carbamoyl phosphate and aspartate to form carbamoyl aspartate and inorganic phosphate, the committed step in the de novo pyrimidine nucleotide biosynthesis pathway. This is Aspartate carbamoyltransferase catalytic subunit from Xanthomonas oryzae pv. oryzae (strain MAFF 311018).